The sequence spans 110 residues: UPF0060 membrane protein PFL_4337 (110 aa).

A run of 4 helical transmembrane segments spans residues Leu5 to Leu25, Ala31 to Val51, Ala59 to Glu79, and Leu84 to Gly104.

It belongs to the UPF0060 family.

The protein resides in the cell inner membrane. The sequence is that of UPF0060 membrane protein PFL_4337 from Pseudomonas fluorescens (strain ATCC BAA-477 / NRRL B-23932 / Pf-5).